The primary structure comprises 327 residues: Beta-ketoacyl-[acyl-carrier-protein] synthase III 2 (327 aa).

Residues C114 and H251 contribute to the active site. The segment at 252–256 is ACP-binding; that stretch reads SANLR. The active site involves N281.

This sequence belongs to the thiolase-like superfamily. FabH family. In terms of assembly, homodimer.

The protein resides in the cytoplasm. The enzyme catalyses malonyl-[ACP] + acetyl-CoA + H(+) = 3-oxobutanoyl-[ACP] + CO2 + CoA. Its pathway is lipid metabolism; fatty acid biosynthesis. Catalyzes the condensation reaction of fatty acid synthesis by the addition to an acyl acceptor of two carbons from malonyl-ACP. Catalyzes the first condensation reaction which initiates fatty acid synthesis and may therefore play a role in governing the total rate of fatty acid production. Possesses both acetoacetyl-ACP synthase and acetyl transacylase activities. Its substrate specificity determines the biosynthesis of branched-chain and/or straight-chain of fatty acids. This chain is Beta-ketoacyl-[acyl-carrier-protein] synthase III 2, found in Bacillus cereus (strain ATCC 14579 / DSM 31 / CCUG 7414 / JCM 2152 / NBRC 15305 / NCIMB 9373 / NCTC 2599 / NRRL B-3711).